The following is a 715-amino-acid chain: Fatty acid oxidation complex subunit alpha (715 aa).

The interval 1–190 is enoyl-CoA hydratase; that stretch reads MTTTSAFMLN…KAGLVDDVVP (190 aa). A 3-hydroxyacyl-CoA dehydrogenase region spans residues 306-714; that stretch reads GPLNSVGILG…FWTNGETDQG (409 aa).

This sequence in the N-terminal section; belongs to the enoyl-CoA hydratase/isomerase family. It in the central section; belongs to the 3-hydroxyacyl-CoA dehydrogenase family. As to quaternary structure, heterotetramer of two alpha chains (FadJ) and two beta chains (FadI).

The protein localises to the cytoplasm. The catalysed reaction is a (3S)-3-hydroxyacyl-CoA = a (2E)-enoyl-CoA + H2O. The enzyme catalyses a 4-saturated-(3S)-3-hydroxyacyl-CoA = a (3E)-enoyl-CoA + H2O. It catalyses the reaction a (3S)-3-hydroxyacyl-CoA + NAD(+) = a 3-oxoacyl-CoA + NADH + H(+). It carries out the reaction (3S)-3-hydroxybutanoyl-CoA = (3R)-3-hydroxybutanoyl-CoA. Its pathway is lipid metabolism; fatty acid beta-oxidation. Functionally, catalyzes the formation of a hydroxyacyl-CoA by addition of water on enoyl-CoA. Also exhibits 3-hydroxyacyl-CoA epimerase and 3-hydroxyacyl-CoA dehydrogenase activities. This chain is Fatty acid oxidation complex subunit alpha, found in Salmonella choleraesuis (strain SC-B67).